The chain runs to 206 residues: Histidine biosynthesis bifunctional protein HisIE (206 aa).

Positions Met1–Phe117 are phosphoribosyl-AMP cyclohydrolase. Residues Leu118 to Lys206 are phosphoribosyl-ATP pyrophosphohydrolase.

This sequence in the N-terminal section; belongs to the PRA-CH family. In the C-terminal section; belongs to the PRA-PH family.

It is found in the cytoplasm. It carries out the reaction 1-(5-phospho-beta-D-ribosyl)-ATP + H2O = 1-(5-phospho-beta-D-ribosyl)-5'-AMP + diphosphate + H(+). The catalysed reaction is 1-(5-phospho-beta-D-ribosyl)-5'-AMP + H2O = 1-(5-phospho-beta-D-ribosyl)-5-[(5-phospho-beta-D-ribosylamino)methylideneamino]imidazole-4-carboxamide. Its pathway is amino-acid biosynthesis; L-histidine biosynthesis; L-histidine from 5-phospho-alpha-D-ribose 1-diphosphate: step 2/9. The protein operates within amino-acid biosynthesis; L-histidine biosynthesis; L-histidine from 5-phospho-alpha-D-ribose 1-diphosphate: step 3/9. The polypeptide is Histidine biosynthesis bifunctional protein HisIE (Xanthomonas campestris pv. campestris (strain ATCC 33913 / DSM 3586 / NCPPB 528 / LMG 568 / P 25)).